Consider the following 778-residue polypeptide: Exo-beta-D-glucosaminidase (778 aa).

Residues Tyr-55, 104 to 105 (GE), 180 to 181 (DE), Glu-308, Glu-349, and Tyr-381 each bind substrate. The active-site Proton donor is Glu-181. Glu-349 acts as the Nucleophile in catalysis.

It belongs to the glycosyl hydrolase 35 family. Homodimer.

The protein localises to the cytoplasm. The enzyme catalyses beta-D-glucosaminyl-(1-&gt;4)-N-acetyl-D-glucosamine + H2O = D-glucosamine + N-acetyl-D-glucosamine. It functions in the pathway glycan degradation; chitin degradation. Its function is as follows. Exo-type enzyme that specifically cleaves the non-reducing terminal glycosidic bond of chitooligosaccharides. Catalyzes the hydrolysis of GlcN-GlcNAc to glucosamine (GlcN) and N-acetylglucosamine (GlcNAc). Involved in chitin degradation. Can also hydrolyze chitosan and chitooligosaccharides of various chain lengths. The polypeptide is Exo-beta-D-glucosaminidase (Pyrococcus horikoshii (strain ATCC 700860 / DSM 12428 / JCM 9974 / NBRC 100139 / OT-3)).